The sequence spans 142 residues: Peptide methionine sulfoxide reductase MsrB (142 aa).

Positions 2–125 (LKKDKSELTD…NSAAIQFIPY (124 aa)) constitute a MsrB domain. The active-site Nucleophile is Cys114.

Belongs to the MsrB Met sulfoxide reductase family.

The catalysed reaction is L-methionyl-[protein] + [thioredoxin]-disulfide + H2O = L-methionyl-(R)-S-oxide-[protein] + [thioredoxin]-dithiol. The polypeptide is Peptide methionine sulfoxide reductase MsrB (Staphylococcus aureus (strain bovine RF122 / ET3-1)).